A 1012-amino-acid polypeptide reads, in one-letter code: Formate dehydrogenase subunit alpha (1012 aa).

The segment at residues 1–35 (MLIKRRAFLKLTAAGATLSAFGGLGVDLAPAKAQA) is a signal peptide (tat-type signal). The 59-residue stretch at 45 to 103 (AKQTTSVCCYCSVGCGLIVHTDKKTNRAINVEGDPDHPINEGSLCAKGASTWQLAENER) folds into the 4Fe-4S Mo/W bis-MGD-type domain. Residues Cys-52, Cys-55, Cys-59, and Cys-89 each coordinate [4Fe-4S] cluster. A W-bis(molybdopterin guanine dinucleotide)-binding site is contributed by Sec-193. Sec-193 is a non-standard amino acid (selenocysteine). Ca(2+)-binding residues include Thr-393, Lys-395, Lys-398, Leu-428, and Asn-430. The cysteines at positions 852 and 879 are disulfide-linked.

This sequence belongs to the prokaryotic molybdopterin-containing oxidoreductase family. In terms of assembly, heterodimer of alpha (FdhA) and beta (FdhB) subunits. [4Fe-4S] cluster is required as a cofactor. It depends on W-bis(molybdopterin guanine dinucleotide) as a cofactor. In terms of processing, the disulfide bond is likely to be broken in the active form of this enzyme. Post-translationally, predicted to be exported by the Tat system. The position of the signal peptide cleavage has been experimentally proven.

It localises to the periplasm. It carries out the reaction formate + NAD(+) = CO2 + NADH. In terms of biological role, alpha chain of the formate dehydrogenase (FDH) catalyze the reversible two-electron oxidation of formate to carbon dioxide. FDH loses activity in the presence of air, but this activity can be restored. The alpha subunit of formate dehydrogenase forms the active site. The protein is Formate dehydrogenase subunit alpha of Megalodesulfovibrio gigas (Desulfovibrio gigas).